The sequence spans 417 residues: NADH-quinone oxidoreductase subunit D (417 aa).

Belongs to the complex I 49 kDa subunit family. As to quaternary structure, NDH-1 is composed of 14 different subunits. Subunits NuoB, C, D, E, F, and G constitute the peripheral sector of the complex.

The protein resides in the cell inner membrane. The enzyme catalyses a quinone + NADH + 5 H(+)(in) = a quinol + NAD(+) + 4 H(+)(out). Functionally, NDH-1 shuttles electrons from NADH, via FMN and iron-sulfur (Fe-S) centers, to quinones in the respiratory chain. The immediate electron acceptor for the enzyme in this species is believed to be ubiquinone. Couples the redox reaction to proton translocation (for every two electrons transferred, four hydrogen ions are translocated across the cytoplasmic membrane), and thus conserves the redox energy in a proton gradient. The polypeptide is NADH-quinone oxidoreductase subunit D (Aromatoleum aromaticum (strain DSM 19018 / LMG 30748 / EbN1) (Azoarcus sp. (strain EbN1))).